The chain runs to 466 residues: MTITELWALIPLLILACGSVFVLMLGAIVPGRCGTVIGVAVCAGTALWAMLAPPQPLAPPTLGVTVTPFTRFFLVFFAVTAGLSLLLARDHAARQGLKGEEYPATILFGTFGMGVVASAANFLTLFLGLEALTFAFYILVAYDHNRPASGEAGLKYLLMGAVSAAFVAFGIALLYGATGTLEISRAVAASAAGGGIALAGWGLLLAGLAFKISLAPAHLWTPDIYQGGPTPVVAFLASGSKGAAIALFLLILSPLGTLGTLRAPLWGLAFLSMTVGNLAALLQPNVKRMLAYSSVAQMGYVALALLSGGRGYEAAAFYAVAYGAMVLAAFGALASLEGETPLEQVDDLRGLGYHRPFQGVVLAVAMLALAGIPPTVGFVGKFAIFFAALKGGEAPLAVIGILTAAASAYYYLRVVVNLYMKPADETGSGQRPTVAEALSLGIAALAIFILGIWPGPLFDLAAAILR.

The next 14 helical transmembrane spans lie at 9 to 29 (LIPL…GAIV), 33 to 53 (CGTV…MLAP), 68 to 88 (PFTR…LLLA), 100 to 120 (EEYP…ASAA), 122 to 142 (FLTL…LVAY), 157 to 177 (LLMG…LYGA), 190 to 210 (SAAG…GLAF), 232 to 252 (VVAF…LLIL), 263 to 283 (APLW…ALLQ), 289 to 309 (MLAY…LSGG), 314 to 334 (AAAF…GALA), 359 to 379 (GVVL…VGFV), 394 to 416 (APLA…RVVV), and 438 to 458 (LSLG…GPLF).

It belongs to the complex I subunit 2 family. NDH-1 is composed of 14 different subunits. Subunits NuoA, H, J, K, L, M, N constitute the membrane sector of the complex.

Its subcellular location is the cell inner membrane. It catalyses the reaction a quinone + NADH + 5 H(+)(in) = a quinol + NAD(+) + 4 H(+)(out). NDH-1 shuttles electrons from NADH, via FMN and iron-sulfur (Fe-S) centers, to quinones in the respiratory chain. The immediate electron acceptor for the enzyme in this species is believed to be ubiquinone. Couples the redox reaction to proton translocation (for every two electrons transferred, four hydrogen ions are translocated across the cytoplasmic membrane), and thus conserves the redox energy in a proton gradient. The polypeptide is NADH-quinone oxidoreductase subunit N (Geobacter metallireducens (strain ATCC 53774 / DSM 7210 / GS-15)).